A 180-amino-acid polypeptide reads, in one-letter code: Kappa-casein (180 aa).

An N-terminal signal peptide occupies residues 1–21 (MMKHFLLVVNILAVTLPFLAA). Threonine 132, threonine 142, threonine 147, and threonine 153 each carry an O-linked (GalNAc...) threonine glycan. A Phosphoserine; alternate modification is found at serine 160. Serine 160 carries O-linked (GalNAc...) serine; alternate glycosylation.

This sequence belongs to the kappa-casein family. In terms of tissue distribution, mammary gland specific. Secreted in milk.

It is found in the secreted. In terms of biological role, kappa-casein stabilizes micelle formation, preventing casein precipitation in milk. This Oryctolagus cuniculus (Rabbit) protein is Kappa-casein (CSN3).